We begin with the raw amino-acid sequence, 372 residues long: N-methyl-L-tryptophan oxidase (372 aa).

Asp-4–His-34 lines the FAD pocket. S-8alpha-FAD cysteine is present on Cys-307.

It belongs to the MSOX/MTOX family. MTOX subfamily. In terms of assembly, monomer. FAD serves as cofactor.

It carries out the reaction N(alpha)-methyl-L-tryptophan + O2 + H2O = L-tryptophan + formaldehyde + H2O2. Functionally, catalyzes the oxidative demethylation of N-methyl-L-tryptophan. The sequence is that of N-methyl-L-tryptophan oxidase from Salmonella typhimurium (strain LT2 / SGSC1412 / ATCC 700720).